A 723-amino-acid chain; its full sequence is Homeobox protein HAT3.1 (723 aa).

The segment covering Met1–Thr10 has biased composition (basic residues). Disordered stretches follow at residues Met1–Arg94 and Lys135–Glu173. Residues Arg11–Asp23 show a composition bias toward polar residues. Over residues Leu58–Ser83 the composition is skewed to basic and acidic residues. The PHD-type zinc-finger motif lies at Asp265–Lys322. 2 disordered regions span residues Gly357–Arg628 and Val680–Lys723. Residues Leu365–Glu407 show a composition bias toward acidic residues. Residues Glu417–Lys427 are compositionally biased toward basic and acidic residues. Acidic residues predominate over residues Asp435 to Lys453. 2 stretches are compositionally biased toward basic and acidic residues: residues Arg518–Asp530 and Asp547–Asp556. Residues Lys580–Ala589 are compositionally biased toward basic residues. The segment at residues Ser614–Pro673 is a DNA-binding region (homeobox). Over residues Val680 to Glu690 the composition is skewed to basic and acidic residues. The span at Val695–Thr705 shows a compositional bias: polar residues.

The protein belongs to the PHD-associated homeobox family. As to expression, primarily detected in root tissue.

It is found in the nucleus. Its function is as follows. Binds only to large DNA fragments. Recognizes a DNA fragment carrying 8 copies of box7 motif of the light-induced cab-E promoter of Nicotiana plumbaginifolia. Also recognizes the box7m1 motif. This is Homeobox protein HAT3.1 (HAT3.1) from Arabidopsis thaliana (Mouse-ear cress).